The following is a 188-amino-acid chain: dCTP deaminase (188 aa).

DCTP contacts are provided by residues 111–116 (KSTYAR), 135–137 (TLE), Gln-156, Tyr-170, and Gln-180. Catalysis depends on Glu-137, which acts as the Proton donor/acceptor.

It belongs to the dCTP deaminase family. As to quaternary structure, homotrimer.

The enzyme catalyses dCTP + H2O + H(+) = dUTP + NH4(+). It participates in pyrimidine metabolism; dUMP biosynthesis; dUMP from dCTP (dUTP route): step 1/2. Functionally, catalyzes the deamination of dCTP to dUTP. The polypeptide is dCTP deaminase (Methylococcus capsulatus (strain ATCC 33009 / NCIMB 11132 / Bath)).